Reading from the N-terminus, the 801-residue chain is MPFSKAWRSAVYPDFREQGAYINYKATKDILHRMKEDIANPSTPDELYNSLLLQKCRVYKWCEKKIKELLTVAEALMAASDYLTEEDTKTNLSLVLNTLGSGNMKCLPPNEARLLADSITHELLRFVECCNLNTDTIEHIIGRMYRYAVLGPTGKHWNNIMTEYDYHKLSIHEIFYLLSKVYDRVTATENMRIVKRSGIPAGTVGSQVFDRRSVKYWVHLQDLPFVIARIIPHLPHSTFKETYQTCKERNIPFTLGSPVSSVYWDNNEFLLYHRRLERLEGATLIRMRWYGDPLENDWNKLGPNDSVFMEIKVHHEAWSGERSNKRRFALKEKEVNSYVHGELDLNPALEKLRAKKASKKELHNFMDLSTEIVTKIDAYDLKPVIRTQCSRAAFQRGIDQSIRVSIDTDLRVCAEDFGLGHHWRYSGVDAPVSYFPYAVVEIKLQCAENERIAPWIEELMSCRYMESVPKFSKYAHGIASLYGHTPFIKMVPYWMHQLDIDIRASTKPEQNQWDPTVGLASGCWERTTDRAIFGVGHAQTQTVGASEAQFLPRTDYTRVYQKALHGIRGEGVATPATADNFQDAEAEGGCASGTAGSRKQQLQPRLPAHTLQYDVDRRHKAYTTFHLYPFAEYGVESLCFTPASGKNAAAEVLSGLIPWQTGKRIRVPQKYDPKTLLTSERYMLKWTEHATRLGLVGLGVIQFGNSMTLPGDVTQLSSFWRANFHIVLGIALVLVALMTLMYALMTFKARSRRVYARKKIRFDDSWGPTVLTVFLAFGICVIAMMHILGRYGPMLTGDDNF.

The Cytoplasmic segment spans residues 1–692; sequence MPFSKAWRSA…MLKWTEHATR (692 aa). The ATP site is built by Lys215, Arg286, Arg288, Lys312, Lys325, and Arg391. Residue Glu441 participates in Mn(2+) binding. Lys473 is an active-site residue. The helical transmembrane segment at 693–713 threads the bilayer; that stretch reads LGLVGLGVIQFGNSMTLPGDV. The Vacuolar portion of the chain corresponds to 714 to 723; the sequence is TQLSSFWRAN. The chain crosses the membrane as a helical span at residues 724–744; sequence FHIVLGIALVLVALMTLMYAL. The Cytoplasmic segment spans residues 745–768; the sequence is MTFKARSRRVYARKKIRFDDSWGP. The chain crosses the membrane as a helical span at residues 769 to 789; the sequence is TVLTVFLAFGICVIAMMHILG. At 790-801 the chain is on the vacuolar side; sequence RYGPMLTGDDNF.

The protein belongs to the VTC4 family. As to quaternary structure, the VTC core complex is an integral membrane heterooligomer composed of at least the catalytic subunit vtc4 and the accessory subunits vtc1 and vtc2. vtc1 is a small membrane protein without hydrophilic domain. Vtc2 and vtc4 are related and have 2 hydrophilic domains that face the cytosol, an N-terminal SPX domain and the central core domain. The central core in vtc4 is the catalytic domain. It depends on Mn(2+) as a cofactor.

The protein localises to the acidocalcisome membrane. It carries out the reaction [phosphate](n) + ATP = [phosphate](n+1) + ADP. Activity of the enzyme is Mn(2+)-dependent and enhanced in the presence of pyrophosphate (PPi). Functionally, component of a polyphosphate synthase complex that utilizes ATP to synthesize and translocate polyphosphate to acidocalcisomes in epimastigotes, insect-stages of Trypanosoma brucei. Catalytic subunit of the vacuolar transporter chaperone (VTC) complex. The VTC complex acts as a vacuolar polyphosphate polymerase that catalyzes the synthesis of inorganic polyphosphate (polyP) via transfer of phosphate from ATP to a growing polyP chain, releasing ADP. VTC exposes its catalytic domain vtc4 to the cytosol, where the growing polyP chain winds through a tunnel-shaped pocket, integrating cytoplasmic polymer synthesis with polyP membrane translocation. The VTC complex carries 9 vacuolar transmembrane domains, which are likely to constitute the translocation channel into the organelle lumen. PolyP synthesis is tightly coupled to its transport into the vacuole lumen, in order to avoid otherwise toxic intermediates in the cytosol, and it depends on the proton gradient across the membrane, formed by V-ATPase. The VTC complex also plays a role in vacuolar membrane fusion. Essential for infection and parasite survival in the mammalian host. The protein is Vacuolar transporter chaperone complex subunit 4 of Trypanosoma cruzi (strain CL Brener).